The sequence spans 456 residues: Histidine--tRNA ligase (456 aa).

This sequence belongs to the class-II aminoacyl-tRNA synthetase family. In terms of assembly, homodimer.

The protein resides in the cytoplasm. The enzyme catalyses tRNA(His) + L-histidine + ATP = L-histidyl-tRNA(His) + AMP + diphosphate + H(+). This is Histidine--tRNA ligase from Borrelia garinii subsp. bavariensis (strain ATCC BAA-2496 / DSM 23469 / PBi) (Borreliella bavariensis).